We begin with the raw amino-acid sequence, 806 residues long: Phosphatidylinositol 4-kinase beta (806 aa).

The PIK helical domain occupies 55-247; it reads LDKVKLIRGS…GTKLRKLILS (193 aa). 2 disordered regions span residues 69–104 and 253–310; these read LDKI…SASR and AHKK…DEPV. Polar residues predominate over residues 283–302; the sequence is DATVSISLSSNLKRTSSNPK. Residues 525 to 791 form the PI3K/PI4K catalytic domain; it reads EPWQEKVRRI…MVDGSMRSIT (267 aa). A G-loop region spans residues 531–537; that stretch reads VRRIREG. The segment at 658–666 is catalytic loop; sequence QVKDRHNGN. Positions 677 to 701 are activation loop; sequence HIDFGFILSSSPRNLGFETSAFKLT.

It belongs to the PI3/PI4-kinase family. Type III PI4K subfamily. Requires Mg(2+) as cofactor. The cofactor is Mn(2+).

It localises to the endomembrane system. The protein resides in the mitochondrion outer membrane. It is found in the rough endoplasmic reticulum membrane. It carries out the reaction a 1,2-diacyl-sn-glycero-3-phospho-(1D-myo-inositol) + ATP = a 1,2-diacyl-sn-glycero-3-phospho-(1D-myo-inositol 4-phosphate) + ADP + H(+). Phosphorylates phosphatidylinositol (PI) in the first committed step in the production of the second messenger inositol-1,4,5,-trisphosphate (PIP). May play an important role in the inner ear development. The polypeptide is Phosphatidylinositol 4-kinase beta (pi4kb) (Xenopus tropicalis (Western clawed frog)).